Reading from the N-terminus, the 89-residue chain is Helix-loop-helix protein 15 (89 aa).

A disordered region spans residues Met-1–Lys-32. A compositionally biased stretch (basic residues) spans Glu-22–Lys-32. A basic motif region spans residues Lys-32–Val-45. The bHLH domain maps to Lys-32–Leu-84. The tract at residues Glu-46–Leu-84 is helix-loop-helix motif.

As to expression, expressed in sensory head neurons of the lateral ganglion.

The protein localises to the nucleus. Its function is as follows. Transcription factor which binds the E box motif 5'-CA[TC][AG]TG-3'. Involved in modulating physiological aging, probably by regulating expression of branched-chain amino acid transferase-1, bcat-1. The sequence is that of Helix-loop-helix protein 15 from Caenorhabditis elegans.